The primary structure comprises 143 residues: MSRSGVAVADESLNAFNDLKLGKKYKFILYALNDSKTEIIVKETSAEQDYDKFLEQLPENDCLYAVYDFEYELGNNEGKRSKIVFFTWSPDTAPVRSKMVYASSKDALRRALNGVSSDIQGTDFSEVAYESVLEKVSRAAGSH.

Residues 5–137 (GVAVADESLN…AYESVLEKVS (133 aa)) enclose the ADF-H domain.

This sequence belongs to the actin-binding proteins ADF family.

It localises to the cytoplasm. The protein resides in the cytoskeleton. Its subcellular location is the nucleus matrix. Its function is as follows. Controls reversibly actin polymerization and depolymerization in a pH-sensitive manner. It has the ability to bind G- and F-actin in a 1:1 ratio of cofilin to actin. Binding to F-actin is regulated by tropomyosin. It is the major component of intranuclear and cytoplasmic actin rods. Required for accumulation of actin at the cell division site via depolymerizing actin at the cell ends. In association with myosin II has a role in the assembly of the contractile ring via severing actin filaments. Involved in the maintenance of the contractile ring once formed. In association with profilin and capping protein, has a role in the mitotic reorganization of the actin cytoskeleton. The sequence is that of Cofilin (COF1) from Kluyveromyces lactis (strain ATCC 8585 / CBS 2359 / DSM 70799 / NBRC 1267 / NRRL Y-1140 / WM37) (Yeast).